A 329-amino-acid polypeptide reads, in one-letter code: Sulfate/thiosulfate import ATP-binding protein CysA (329 aa).

The ABC transporter domain occupies 3-237 (IEIRNVSKNF…PASDFVYHFL (235 aa)). Residue 35-42 (GPSGCGKT) participates in ATP binding.

The protein belongs to the ABC transporter superfamily. Sulfate/tungstate importer (TC 3.A.1.6) family. The complex is composed of two ATP-binding proteins (CysA), two transmembrane proteins (CysT and CysW) and a solute-binding protein (CysP).

It is found in the cell inner membrane. The enzyme catalyses sulfate(out) + ATP + H2O = sulfate(in) + ADP + phosphate + H(+). The catalysed reaction is thiosulfate(out) + ATP + H2O = thiosulfate(in) + ADP + phosphate + H(+). Part of the ABC transporter complex CysAWTP involved in sulfate/thiosulfate import. Responsible for energy coupling to the transport system. This is Sulfate/thiosulfate import ATP-binding protein CysA from Pseudomonas aeruginosa (strain ATCC 15692 / DSM 22644 / CIP 104116 / JCM 14847 / LMG 12228 / 1C / PRS 101 / PAO1).